A 426-amino-acid polypeptide reads, in one-letter code: Histone deacetylase 9 (426 aa).

Residues 6 to 318 form a histone deacetylase region; sequence KISYFYDGDV…WTVETGILLD (313 aa). Catalysis depends on His-137, which acts as the Proton donor/acceptor. Zn(2+) is bound by residues Asp-172, His-174, and Asp-261. The interval 383–426 is disordered; sequence PDFYIPDFDEDEQNPDVRADQRSRDKQIQRDDEYFDGDNDNDAS. Residues 397–414 show a composition bias toward basic and acidic residues; the sequence is PDVRADQRSRDKQIQRDD. Positions 415 to 426 are enriched in acidic residues; that stretch reads EYFDGDNDNDAS.

This sequence belongs to the histone deacetylase family. HD type 1 subfamily. As to quaternary structure, interacts with AHL22. Binds to farnesylated ASG2 in the cytosol. Requires Zn(2+) as cofactor.

The protein localises to the nucleus. It is found in the cytoplasm. It localises to the cytosol. The catalysed reaction is N(6)-acetyl-L-lysyl-[histone] + H2O = L-lysyl-[histone] + acetate. Functionally, responsible for the deacetylation of lysine residues on the N-terminal part of the core histones (H2A, H2B, H3 and H4). Histone deacetylation gives a tag for epigenetic repression and plays an important role in transcriptional regulation, cell cycle progression and developmental events. Histone deacetylases act via the formation of large multiprotein complexes. The protein is Histone deacetylase 9 (HDA9) of Arabidopsis thaliana (Mouse-ear cress).